A 247-amino-acid chain; its full sequence is Probable enoyl-CoA hydratase echA6 (247 aa).

This sequence belongs to the enoyl-CoA hydratase/isomerase family.

It carries out the reaction a (3S)-3-hydroxyacyl-CoA = a (2E)-enoyl-CoA + H2O. The catalysed reaction is a 4-saturated-(3S)-3-hydroxyacyl-CoA = a (3E)-enoyl-CoA + H2O. Its function is as follows. Could possibly oxidize fatty acids using specific components. The chain is Probable enoyl-CoA hydratase echA6 (echA6) from Mycobacterium leprae (strain TN).